The primary structure comprises 294 residues: 4-hydroxy-tetrahydrodipicolinate synthase (294 aa).

Residue Thr-45 coordinates pyruvate. The Proton donor/acceptor role is filled by Tyr-133. The active-site Schiff-base intermediate with substrate is Lys-162. Residue Ile-204 participates in pyruvate binding.

It belongs to the DapA family. Homotetramer; dimer of dimers.

It localises to the cytoplasm. It carries out the reaction L-aspartate 4-semialdehyde + pyruvate = (2S,4S)-4-hydroxy-2,3,4,5-tetrahydrodipicolinate + H2O + H(+). It participates in amino-acid biosynthesis; L-lysine biosynthesis via DAP pathway; (S)-tetrahydrodipicolinate from L-aspartate: step 3/4. Is allosterically regulated by the feedback inhibitor (S)-lysine. In terms of biological role, catalyzes the condensation of (S)-aspartate-beta-semialdehyde [(S)-ASA] and pyruvate to 4-hydroxy-tetrahydrodipicolinate (HTPA). The protein is 4-hydroxy-tetrahydrodipicolinate synthase of Agrobacterium fabrum (strain C58 / ATCC 33970) (Agrobacterium tumefaciens (strain C58)).